The primary structure comprises 446 residues: Vacuolar cation/proton exchanger 4 (446 aa).

The span at 1–16 (MSSISTESSSNLSLLE) shows a compositional bias: low complexity. The tract at residues 1 to 33 (MSSISTESSSNLSLLENGGGGSDKPTAETSRRV) is disordered. Over 1 to 69 (MSSISTESSS…MRRILTNLQE (69 aa)) the chain is Cytoplasmic. The chain crosses the membrane as a helical span at residues 70-90 (VLLGTKLFILFPAVPLAVVAH). The Extracellular segment spans residues 91–96 (RYDCPR). Residues 97 to 117 (AWVFALSLLGLTPLAERISFL) form a helical membrane-spanning segment. Topologically, residues 118–128 (TEQIAFHTGPT) are cytoplasmic. The chain crosses the membrane as a helical span at residues 129 to 149 (VGGLMNATCGNATEMIIAILA). Positions 138–173 (GNATEMIIAILAVGQRKMRIVKLSLLGSILSNLLFV) are cation selection. Residues 150 to 162 (VGQRKMRIVKLSL) lie on the Extracellular side of the membrane. The chain crosses the membrane as a helical span at residues 163–183 (LGSILSNLLFVLGTSLFLGGI). At 184 to 196 (SNLRKHQSFDPRQ) the chain is on the cytoplasmic side. The chain crosses the membrane as a helical span at residues 197-217 (GDMNSMLLYLALLCQTLPMIM). Residues 218–238 (RFTMEAEEYDGSDVVVLSRAS) are Extracellular-facing. The helical transmembrane segment at 239–259 (SFVMLIAYLAFLIFHLFSSHL) threads the bilayer. Residues 260–285 (SPPPPPLPQREDVHDDDVSDKEEEGA) lie on the Cytoplasmic side of the membrane. The helical transmembrane segment at 286–306 (VIGMWSAIFWLIIMTLLVALL) threads the bilayer. Residues 307–319 (SDYLVSTIQDAAD) are Extracellular-facing. A helical transmembrane segment spans residues 320-340 (SWGLSVGFIGIILLPIVGNAA). Residues 337–372 (GNAAEHAGAVIFAFRNKLDITLGIALGSATQIALFV) are cation selection. At 341-359 (EHAGAVIFAFRNKLDITLG) the chain is on the cytoplasmic side. The helical transmembrane segment at 360–380 (IALGSATQIALFVVPVTVLVA) threads the bilayer. Residues 381-388 (WTMGIEMD) are Extracellular-facing. Residues 389 to 409 (LNFNLLETACFALSILVTSLV) form a helical membrane-spanning segment. The Cytoplasmic segment spans residues 410–416 (LQDGTSN). Residues 417–437 (YMKGLVLLLCYVVIAACFFVS) form a helical membrane-spanning segment. The Extracellular portion of the chain corresponds to 438-446 (NSPSSKLLF).

The protein belongs to the Ca(2+):cation antiporter (CaCA) (TC 2.A.19) family. Cation/proton exchanger (CAX) subfamily. In terms of tissue distribution, expressed at low levels in all tissues.

Its subcellular location is the vacuole membrane. Functionally, vacuolar cation/proton exchanger (CAX). Translocates Ca(2+) and other metal ions into vacuoles using the proton gradient formed by H(+)-ATPase and H(+)-pyrophosphatase. Cation selectivity transport in tobacco root tonoplast vesicles is Cd(2+)&gt;Zn(2+)&gt;&gt;Ca(2+)&gt;&gt;&gt;Mn(2+). The chain is Vacuolar cation/proton exchanger 4 (CAX4) from Arabidopsis thaliana (Mouse-ear cress).